Reading from the N-terminus, the 213-residue chain is FMN-dependent NADH:quinone oxidoreductase 3 (213 aa).

FMN-binding positions include serine 10, 16–18 (SVS), and 96–99 (MYNF).

It belongs to the azoreductase type 1 family. Homodimer. FMN is required as a cofactor.

It carries out the reaction 2 a quinone + NADH + H(+) = 2 a 1,4-benzosemiquinone + NAD(+). The catalysed reaction is N,N-dimethyl-1,4-phenylenediamine + anthranilate + 2 NAD(+) = 2-(4-dimethylaminophenyl)diazenylbenzoate + 2 NADH + 2 H(+). Its function is as follows. Quinone reductase that provides resistance to thiol-specific stress caused by electrophilic quinones. Shows a preference for naphthoquinones such as plumbagin. In terms of biological role, also exhibits azoreductase activity. Catalyzes the reductive cleavage of the azo bond in aromatic azo compounds to the corresponding amines. Preferred substrates are methyl red, amaranth and p-aminoazobenzene sulfonamide (PAABSA). The polypeptide is FMN-dependent NADH:quinone oxidoreductase 3 (Pseudomonas aeruginosa (strain ATCC 15692 / DSM 22644 / CIP 104116 / JCM 14847 / LMG 12228 / 1C / PRS 101 / PAO1)).